A 72-amino-acid chain; its full sequence is Translation initiation factor IF-1 (72 aa).

The S1-like domain maps to M1 to S72.

Belongs to the IF-1 family. In terms of assembly, component of the 30S ribosomal translation pre-initiation complex which assembles on the 30S ribosome in the order IF-2 and IF-3, IF-1 and N-formylmethionyl-tRNA(fMet); mRNA recruitment can occur at any time during PIC assembly.

It localises to the cytoplasm. Functionally, one of the essential components for the initiation of protein synthesis. Stabilizes the binding of IF-2 and IF-3 on the 30S subunit to which N-formylmethionyl-tRNA(fMet) subsequently binds. Helps modulate mRNA selection, yielding the 30S pre-initiation complex (PIC). Upon addition of the 50S ribosomal subunit IF-1, IF-2 and IF-3 are released leaving the mature 70S translation initiation complex. The polypeptide is Translation initiation factor IF-1 (Malacoplasma penetrans (strain HF-2) (Mycoplasma penetrans)).